Reading from the N-terminus, the 324-residue chain is MTKRTIVVGTRQSQLALTQTEQVIGDLKELCRAHGLPFEFEIKKIVTKGDRILDVTLSKIGGKGLFVKEIEQAMLDGEIDMAVHSMKDMPSVLPEGLINGGVPLRKDPRDALISRSGLHLHELPQGARVGTSTLRRSSQLLAYRPDLVLEPVRGNIDSRLRKLEEEGFDAIILAAAGLQRMGWENRVTAYLSADVCLPAVGQGALGIECRENDAELRDVLSLYNDPDTALTVAAERRFLAVLNGGCQVPIAAYANLERAGGQAPEEGGRAAASQAPAALRIRLTGMVGSADGRGYFEGECRREDPVAFGERIAGLLLAQGGRVT.

An S-(dipyrrolylmethanemethyl)cysteine modification is found at Cys-246. The segment at 261–279 (GQAPEEGGRAAASQAPAAL) is insert.

It belongs to the HMBS family. Monomer. Dipyrromethane is required as a cofactor.

The enzyme catalyses 4 porphobilinogen + H2O = hydroxymethylbilane + 4 NH4(+). It functions in the pathway porphyrin-containing compound metabolism; protoporphyrin-IX biosynthesis; coproporphyrinogen-III from 5-aminolevulinate: step 2/4. Its function is as follows. Tetrapolymerization of the monopyrrole PBG into the hydroxymethylbilane pre-uroporphyrinogen in several discrete steps. This Paenibacillus macerans (Bacillus macerans) protein is Porphobilinogen deaminase (hemC).